A 249-amino-acid polypeptide reads, in one-letter code: Selenoprotein BthD (249 aa).

Residues M1–L22 form a disordered region. Residues K8–G19 are compositionally biased toward basic and acidic residues. A cross-link (cysteinyl-selenocysteine (Cys-Sec); redox-active) is located at residues C34–U37. U37 is a non-standard amino acid (selenocysteine). The tract at residues Q122–R249 is disordered. Residue S147 is modified to Phosphoserine. A compositionally biased stretch (basic and acidic residues) spans E175–K198. Positions T199–A210 are enriched in basic residues.

As to expression, expressed in the developing salivary gland at late stages of embryogenesis. Also expressed in brain, neuroblast and wing disk.

The protein localises to the cytoplasm. The protein resides in the secreted. In terms of biological role, may be involved in a redox-related process. Required for survival and specifically for salivary gland morphogenesis. This is Selenoprotein BthD (BthD) from Drosophila melanogaster (Fruit fly).